The chain runs to 60 residues: MTKGKKTAKYKYYKIEGDKVIRLKKTCPRCGPGVFMAEHLNRYACGKCGYMEWKQPQKKE.

Zn(2+)-binding residues include Cys27, Cys30, Cys45, and Cys48. The segment at 27–48 (CPRCGPGVFMAEHLNRYACGKC) adopts a C4-type zinc-finger fold.

Belongs to the eukaryotic ribosomal protein eS31 family. Part of the 30S ribosomal subunit. The cofactor is Zn(2+).

This Methanocaldococcus jannaschii (strain ATCC 43067 / DSM 2661 / JAL-1 / JCM 10045 / NBRC 100440) (Methanococcus jannaschii) protein is Small ribosomal subunit protein eS31.